The sequence spans 187 residues: uncharacterized protein (187 aa).

This is an uncharacterized protein from Homo sapiens (Human).